A 337-amino-acid chain; its full sequence is Protein BIG GRAIN 1-like (337 aa).

Disordered stretches follow at residues 1–32 (MRDM…PSFS), 120–163 (SAAG…RPAS), and 179–235 (KRPS…PSRS). Positions 137 to 146 (HEQPDVEKTA) are enriched in basic and acidic residues. 2 stretches are compositionally biased toward low complexity: residues 150-163 (PGSA…RPAS) and 195-209 (PACS…SSYA).

The protein belongs to the BIG GRAIN 1 (BG1) plant protein family.

Its subcellular location is the cell membrane. Involved in auxin transport. Regulator of the auxin signaling pathway. This is Protein BIG GRAIN 1-like from Oryza sativa subsp. japonica (Rice).